The primary structure comprises 186 residues: Interferon lambda-3 (186 aa).

The first 21 residues, 1–21 (MVCYGVTIILVGTLGSLLVGA), serve as a signal peptide directing secretion. 3 disulfides stabilise this stretch: cysteine 31–cysteine 128, cysteine 65–cysteine 160, and cysteine 178–cysteine 185.

Belongs to the lambda interferon family.

The protein localises to the secreted. In terms of biological role, cytokine which plays a critical role in the antiviral host defense, predominantly in the epithelial tissues. Acts as a ligand for the heterodimeric class II cytokine receptor composed of IL10RB and IFNLR1, and receptor engagement leads to the activation of the JAK/STAT signaling pathway resulting in the expression of IFN-stimulated genes (ISG), which mediate the antiviral state. Has a restricted receptor distribution and therefore restricted targets: is primarily active in epithelial cells and this cell type-selective action is because of the epithelial cell-specific expression of its receptor IFNLR1. Exhibits antiviral activity against the H5N1 influenza A virus. Induces the expression of the antiviral MX protein in epithelial-rich tissues, such as intestine, trachea and lung. This is Interferon lambda-3 (IFNL3) from Gallus gallus (Chicken).